Reading from the N-terminus, the 1060-residue chain is Protein FAM184B (1060 aa).

Polar residues predominate over residues 1-17 (MASALNSKINPPGTCQG). Residues 1–24 (MASALNSKINPPGTCQGSKADGGA) are disordered. Positions 51–159 (ALNTRQDEAE…EMLELKADYE (109 aa)) form a coiled coil. The segment at 165 to 191 (LTSHEATPQGRLPQESPETKSEPGQGP) is disordered. 2 coiled-coil regions span residues 192–333 (EMQE…DRMM) and 402–502 (MKQQ…RLEE). 3 disordered regions span residues 532–566 (QDPC…EERT), 681–700 (TEER…HQTH), and 762–803 (GRQQ…GSGE). Composition is skewed to basic and acidic residues over residues 536–554 (LKLD…KLAA), 681–690 (TEERLKKESS), and 773–785 (DSKD…EERG). The stretch at 584-769 (LKEKTSKIQR…ALGRQQASSQ (186 aa)) forms a coiled coil. Residues 806 to 934 (GLWEENAQLQ…KQLTEERRFH (129 aa)) are a coiled coil. 2 stretches are compositionally biased toward polar residues: residues 994–1009 (SRIN…SLDP) and 1018–1030 (KPNQ…TATR). A disordered region spans residues 994-1050 (SRINAPPITTSPSLDPSPSCGRTYKPNQSTDAKTATRTPDGETAQAKEVQQKQGSPH).

Belongs to the FAM184 family.

The chain is Protein FAM184B (FAM184B) from Homo sapiens (Human).